A 212-amino-acid polypeptide reads, in one-letter code: Protein GrpE (212 aa).

A disordered region spans residues 1–69; sequence MAEMSNNKTS…LESAKKEIES (69 aa). Residues 40–60 are compositionally biased toward low complexity; the sequence is ETTQTESMETAETETSLQTEL.

It belongs to the GrpE family. In terms of assembly, homodimer.

The protein resides in the cytoplasm. Functionally, participates actively in the response to hyperosmotic and heat shock by preventing the aggregation of stress-denatured proteins, in association with DnaK and GrpE. It is the nucleotide exchange factor for DnaK and may function as a thermosensor. Unfolded proteins bind initially to DnaJ; upon interaction with the DnaJ-bound protein, DnaK hydrolyzes its bound ATP, resulting in the formation of a stable complex. GrpE releases ADP from DnaK; ATP binding to DnaK triggers the release of the substrate protein, thus completing the reaction cycle. Several rounds of ATP-dependent interactions between DnaJ, DnaK and GrpE are required for fully efficient folding. In Leptospira interrogans serogroup Icterohaemorrhagiae serovar Lai (strain 56601), this protein is Protein GrpE.